The chain runs to 453 residues: Bifunctional protein GlmU (453 aa).

The pyrophosphorylase stretch occupies residues 1–225 (MNIVILAAGT…EWETLGVNSK (225 aa)). Residues 6–9 (LAAG), K20, Q71, 76–77 (GT), 98–100 (YGD), G135, E150, N165, and N223 each bind UDP-N-acetyl-alpha-D-glucosamine. A Mg(2+)-binding site is contributed by D100. A Mg(2+)-binding site is contributed by N223. A linker region spans residues 226–246 (QQLAELERIHQRNVADDLLVA). Residues 247-453 (GVTIADPARI…GYVRPTKKKS (207 aa)) are N-acetyltransferase. UDP-N-acetyl-alpha-D-glucosamine-binding residues include R329 and K347. H359 acts as the Proton acceptor in catalysis. 2 residues coordinate UDP-N-acetyl-alpha-D-glucosamine: Y362 and N373. Residues A376, 382-383 (NY), S401, and A419 contribute to the acetyl-CoA site.

The protein in the N-terminal section; belongs to the N-acetylglucosamine-1-phosphate uridyltransferase family. It in the C-terminal section; belongs to the transferase hexapeptide repeat family. As to quaternary structure, homotrimer. Requires Mg(2+) as cofactor.

The protein localises to the cytoplasm. It catalyses the reaction alpha-D-glucosamine 1-phosphate + acetyl-CoA = N-acetyl-alpha-D-glucosamine 1-phosphate + CoA + H(+). The enzyme catalyses N-acetyl-alpha-D-glucosamine 1-phosphate + UTP + H(+) = UDP-N-acetyl-alpha-D-glucosamine + diphosphate. It participates in nucleotide-sugar biosynthesis; UDP-N-acetyl-alpha-D-glucosamine biosynthesis; N-acetyl-alpha-D-glucosamine 1-phosphate from alpha-D-glucosamine 6-phosphate (route II): step 2/2. The protein operates within nucleotide-sugar biosynthesis; UDP-N-acetyl-alpha-D-glucosamine biosynthesis; UDP-N-acetyl-alpha-D-glucosamine from N-acetyl-alpha-D-glucosamine 1-phosphate: step 1/1. It functions in the pathway bacterial outer membrane biogenesis; LPS lipid A biosynthesis. Functionally, catalyzes the last two sequential reactions in the de novo biosynthetic pathway for UDP-N-acetylglucosamine (UDP-GlcNAc). The C-terminal domain catalyzes the transfer of acetyl group from acetyl coenzyme A to glucosamine-1-phosphate (GlcN-1-P) to produce N-acetylglucosamine-1-phosphate (GlcNAc-1-P), which is converted into UDP-GlcNAc by the transfer of uridine 5-monophosphate (from uridine 5-triphosphate), a reaction catalyzed by the N-terminal domain. The sequence is that of Bifunctional protein GlmU from Paraburkholderia phymatum (strain DSM 17167 / CIP 108236 / LMG 21445 / STM815) (Burkholderia phymatum).